The sequence spans 368 residues: WAT1-related protein At5g40240 (368 aa).

Helical transmembrane passes span 18–38 (VVPFAAMFAVECATVGSNTLF), 50–70 (VFVFYSYIVSTLLLLPLSVIF), 82–102 (PLFFKIFLLGLVGFMSQIAGC), 111–131 (TLASAISNLTPAFTFTLAVIF), 142–162 (ATQAKIIGAILSISGALVVVL), 194–214 (WIIGGLLLASQYFLISVWYIL), 226–246 (ITVVFFYNLFATLISVPVCLF), 260–280 (ISLAAIIYSGVFVSLFSALTH), 292–312 (ISLFRPLSIAIAVAMGAIFLG), and 315–335 (LHLGSVIGSMILCIGFYTVIW). 2 consecutive EamA domains span residues 33–161 (GSNT…LVVV) and 208–334 (ISVW…YTVI).

Belongs to the drug/metabolite transporter (DMT) superfamily. Plant drug/metabolite exporter (P-DME) (TC 2.A.7.4) family.

It is found in the membrane. The polypeptide is WAT1-related protein At5g40240 (Arabidopsis thaliana (Mouse-ear cress)).